The following is a 491-amino-acid chain: UDP-N-acetylmuramate--L-alanine ligase (491 aa).

126–132 (GTHGKTT) contributes to the ATP binding site.

This sequence belongs to the MurCDEF family.

It localises to the cytoplasm. It catalyses the reaction UDP-N-acetyl-alpha-D-muramate + L-alanine + ATP = UDP-N-acetyl-alpha-D-muramoyl-L-alanine + ADP + phosphate + H(+). Its pathway is cell wall biogenesis; peptidoglycan biosynthesis. Its function is as follows. Cell wall formation. The polypeptide is UDP-N-acetylmuramate--L-alanine ligase (Shigella dysenteriae serotype 1 (strain Sd197)).